The primary structure comprises 903 residues: DNA mismatch repair protein MutS (903 aa).

Positions 1–89 (MPRSASQPPD…DEPAWGHHSQ (89 aa)) are disordered. Composition is skewed to low complexity over residues 20–36 (APEP…SEPE) and 49–62 (ADAA…QATA). Residue 719–726 (GPNASGKS) participates in ATP binding.

It belongs to the DNA mismatch repair MutS family.

This protein is involved in the repair of mismatches in DNA. It is possible that it carries out the mismatch recognition step. This protein has a weak ATPase activity. This chain is DNA mismatch repair protein MutS, found in Synechococcus sp. (strain CC9605).